A 375-amino-acid chain; its full sequence is Peptide chain release factor 1 (375 aa).

The residue at position 237 (glutamine 237) is an N5-methylglutamine. The span at 289 to 299 (AAREAQERQER) shows a compositional bias: basic and acidic residues. A disordered region spans residues 289–326 (AAREAQERQERASQVGSGDRSEKIRTYNYPQNRVTDHR).

The protein belongs to the prokaryotic/mitochondrial release factor family. Methylated by PrmC. Methylation increases the termination efficiency of RF1.

Its subcellular location is the cytoplasm. Peptide chain release factor 1 directs the termination of translation in response to the peptide chain termination codons UAG and UAA. In Deinococcus radiodurans (strain ATCC 13939 / DSM 20539 / JCM 16871 / CCUG 27074 / LMG 4051 / NBRC 15346 / NCIMB 9279 / VKM B-1422 / R1), this protein is Peptide chain release factor 1 (prfA).